The primary structure comprises 197 residues: Holliday junction branch migration complex subunit RuvA (197 aa).

Positions 1-64 (MYDYIKGIYK…DDSINLYGFF (64 aa)) are domain I. The domain II stretch occupies residues 65–143 (TEEERDMFNL…NDDIISDIDD (79 aa)). The interval 144 to 154 (LDSISNFQLHS) is flexible linker. The domain III stretch occupies residues 154–197 (SAEALEALMSLGYSQKESEKALKNVDKENSLEDIIKACLKYLMG).

The protein belongs to the RuvA family. Homotetramer. Forms an RuvA(8)-RuvB(12)-Holliday junction (HJ) complex. HJ DNA is sandwiched between 2 RuvA tetramers; dsDNA enters through RuvA and exits via RuvB. An RuvB hexamer assembles on each DNA strand where it exits the tetramer. Each RuvB hexamer is contacted by two RuvA subunits (via domain III) on 2 adjacent RuvB subunits; this complex drives branch migration. In the full resolvosome a probable DNA-RuvA(4)-RuvB(12)-RuvC(2) complex forms which resolves the HJ.

The protein resides in the cytoplasm. The RuvA-RuvB-RuvC complex processes Holliday junction (HJ) DNA during genetic recombination and DNA repair, while the RuvA-RuvB complex plays an important role in the rescue of blocked DNA replication forks via replication fork reversal (RFR). RuvA specifically binds to HJ cruciform DNA, conferring on it an open structure. The RuvB hexamer acts as an ATP-dependent pump, pulling dsDNA into and through the RuvAB complex. HJ branch migration allows RuvC to scan DNA until it finds its consensus sequence, where it cleaves and resolves the cruciform DNA. This chain is Holliday junction branch migration complex subunit RuvA, found in Clostridium tetani (strain Massachusetts / E88).